Consider the following 229-residue polypeptide: UPF0173 metal-dependent hydrolase SERP1270 (229 aa).

Belongs to the UPF0173 family.

This Staphylococcus epidermidis (strain ATCC 35984 / DSM 28319 / BCRC 17069 / CCUG 31568 / BM 3577 / RP62A) protein is UPF0173 metal-dependent hydrolase SERP1270.